The following is a 278-amino-acid chain: Large ribosomal subunit protein uL2 (278 aa).

3 disordered regions span residues 1–20 (MAIRKYKPTTPGRRGSSVSD), 25–57 (TRSTPEKSLLRPLTKSGGRNAHGRITTRHRGGG), and 224–278 (VVMN…GKKR). Basic residues-rich tracts occupy residues 45–57 (AHGRITTRHRGGG) and 269–278 (VRRRKTGKKR).

It belongs to the universal ribosomal protein uL2 family. As to quaternary structure, part of the 50S ribosomal subunit. Forms a bridge to the 30S subunit in the 70S ribosome.

In terms of biological role, one of the primary rRNA binding proteins. Required for association of the 30S and 50S subunits to form the 70S ribosome, for tRNA binding and peptide bond formation. It has been suggested to have peptidyltransferase activity; this is somewhat controversial. Makes several contacts with the 16S rRNA in the 70S ribosome. In Nocardia farcinica (strain IFM 10152), this protein is Large ribosomal subunit protein uL2.